The following is a 1105-amino-acid chain: SWI/SNF complex subunit SMARCC1 (1105 aa).

Position 2 is an N-acetylalanine (alanine 2). The segment at 28–302 is marR-like, BRCT and chromo domains module; that stretch reads LAVYRRKDGG…PVSFRQRIST (275 aa). The 127-residue stretch at 38–164 folds into the MarR-like domain; the sequence is PATKFWESPE…IEKTLVQNNC (127 aa). Positions 168–211 constitute a BRCT; N-terminus domain; the sequence is PNIYLIPDIDLKLANKLKDIIKRHQGTFTDEKSKASHHIYPYSS. Residue lysine 179 forms a Glycyl lysine isopeptide (Lys-Gly) (interchain with G-Cter in SUMO2) linkage. A Chromo domain is found at 217 to 245; it reads EWLRPVMRKEKQVLVHWGFYPDSYDTWVH. Residues 261-285 enclose the BRCT; C-terminus domain; the sequence is KPWKVHVKWILDTDIFNEWMNEEDY. The segment at 296–439 is disordered; sequence FRQRISTKNE…DQSRSVDLGE (144 aa). Basic and acidic residues predominate over residues 302-318; that stretch reads TKNEEPVRSPERRDRKA. Phosphoserine occurs at positions 310, 328, and 330. The residue at position 335 (threonine 335) is a Phosphothreonine. Lysine 345 and lysine 346 each carry N6-acetyllysine. Position 350 is a phosphoserine (serine 350). Lysine 354 carries the post-translational modification N6-acetyllysine. A Phosphoserine modification is found at serine 357. Lysine 359 is modified (N6-acetyllysine; alternate). Lysine 359 is covalently cross-linked (Glycyl lysine isopeptide (Lys-Gly) (interchain with G-Cter in SUMO2); alternate). At threonine 398 the chain carries Phosphothreonine. One can recognise an SWIRM domain in the interval 449–546; sequence IIIPSYASWF…YQVDPESRPM (98 aa). Residue serine 573 is modified to Phosphoserine. Lysine 592 is covalently cross-linked (Glycyl lysine isopeptide (Lys-Gly) (interchain with G-Cter in SUMO2)). The SANT domain occupies 618-669; that stretch reads SAGREWTEQETLLLLEALEMYKDDWNKVSEHVGSRTQDECILHFLRLPIEDP. Residue lysine 739 forms a Glycyl lysine isopeptide (Lys-Gly) (interchain with G-Cter in SUMO2) linkage. The interval 745–860 is disordered; it reads ARASGKVDPT…DTGKKKVEHE (116 aa). Residues 776–785 show a composition bias toward acidic residues; the sequence is AEEEKMEADP. Residues 789–860 are compositionally biased toward basic and acidic residues; that stretch reads QPEKAENKVE…DTGKKKVEHE (72 aa). A Glycyl lysine isopeptide (Lys-Gly) (interchain with G-Cter in SUMO2) cross-link involves residue lysine 796. A phosphoserine mark is found at serine 822 and serine 825. Glycyl lysine isopeptide (Lys-Gly) (interchain with G-Cter in SUMO2) cross-links involve residues lysine 829 and lysine 856. Residues 914 to 946 are a coiled coil; sequence FEELETIMDREKEALEQQRQQLLTERQNFHMEQ. Lysine 948 is modified (N6-acetyllysine). 2 disordered regions span residues 956 to 1028 and 1041 to 1105; these read QQME…PGQH and IHPS…SAAP. Residues 957–993 are compositionally biased toward low complexity; the sequence is QMEQQQHGQNPQQAHQHSGGPGLAPLGAAGHPGMMPH. Composition is skewed to pro residues over residues 994–1017 and 1048–1057; these read QQPP…PGQI and PTPPGMPPMP. Position 1064 is an asymmetric dimethylarginine (arginine 1064). The span at 1073–1105 shows a compositional bias: pro residues; that stretch reads MYPPPPQQQPPPPPPADGVPPPPAPGPPASAAP.

Belongs to the SMARCC family. Component of the multiprotein chromatin-remodeling complexes SWI/SNF: SWI/SNF-A (BAF), SWI/SNF-B (PBAF) and related complexes. The canonical complex contains a catalytic subunit (either SMARCA4/BRG1/BAF190A or SMARCA2/BRM/BAF190B) and at least SMARCE1, ACTL6A/BAF53, SMARCC1/BAF155, SMARCC2/BAF170, and SMARCB1/SNF5/BAF47. Other subunits specific to each of the complexes may also be present permitting several possible combinations developmentally and tissue specific. Component of the BAF complex, which includes at least actin (ACTB), ARID1A/BAF250A, ARID1B/BAF250B, SMARCA2/BRM, SMARCA4/BRG1, ACTL6A/BAF53, ACTL6B/BAF53B, SMARCE1/BAF57, SMARCC1/BAF155, SMARCC2/BAF170, SMARCB1/SNF5/INI1, and one or more SMARCD1/BAF60A, SMARCD2/BAF60B, or SMARCD3/BAF60C. In muscle cells, the BAF complex also contains DPF3. Component of neural progenitors-specific chromatin remodeling complex (npBAF complex) composed of at least, ARID1A/BAF250A or ARID1B/BAF250B, SMARCD1/BAF60A, SMARCD3/BAF60C, SMARCA2/BRM/BAF190B, SMARCA4/BRG1/BAF190A, SMARCB1/BAF47, SMARCC1/BAF155, SMARCE1/BAF57, SMARCC2/BAF170, PHF10/BAF45A, ACTL6A/BAF53A and actin. Component of neuron-specific chromatin remodeling complex (nBAF complex) composed of at least, ARID1A/BAF250A or ARID1B/BAF250B, SMARCD1/BAF60A, SMARCD3/BAF60C, SMARCA2/BRM/BAF190B, SMARCA4/BRG1/BAF190A, SMARCB1/BAF47, SMARCC1/BAF155, SMARCE1/BAF57, SMARCC2/BAF170, DPF1/BAF45B, DPF3/BAF45C, ACTL6B/BAF53B and actin. Component of the SWI/SNF-B (PBAF) chromatin remodeling complex, at least composed of SMARCA4/BRG1, SMARCB1/BAF47/SNF5, ACTL6A/BAF53A or ACTL6B/BAF53B, SMARCE1/BAF57, SMARCD1/BAF60A, SMARCD2/BAF60B, perhaps SMARCD3/BAF60C, SMARCC1/BAF155, SMARCC2/BAF170, PBRM1/BAF180, ARID2/BAF200 and actin. Component of SWI/SNF (GBAF) subcomplex, which includes at least BICRA or BICRAL (mutually exclusive), BRD9, SS18, SMARCA2/BRM, SMARCA4/BRG1/BAF190A, ACTL6A/BAF53, SMARCC1/BAF155, and SMARCD1/BAF60A. May also interact with the SIN3A histone deacetylase transcription repressor complex in conjunction with SMARCA2 and SMARCA4. The minimal complex composed of SMARCC1 and SMARCA4 seems to be able to associate with cyclin such as CCNE1 or transcription factors such as KLF1 or GATA1. Interacts with NR3C1 and SMARD1. Interacts with TRIP12; leading to disrupt interaction between TRIP12 and SMARCE1 and prevent SMARCE1 ubiquitination. Interacts with CEBPB (when not methylated). Interacts with KDM6B. Interacts with MKKS; the interaction takes place predominantly in the cytoplasm and may modulate SMARCC1 location. Interacts with DPF2. Interacts with PRDM1/BLIMP1. Interacts with DPF3a (isoform 2 of DPF3/BAF45C) and with HDGFL2 in a DPF3a-dependent manner. Phosphorylated on undefined residues at the G2/M transition by ERK1 and other kinases. This may contribute to cell cycle specific inactivation of remodeling complexes containing the phosphorylated protein. Expressed in brain, heart, muscle, placenta, lung, liver, muscle, kidney and pancreas.

Its subcellular location is the nucleus. It is found in the cytoplasm. In terms of biological role, involved in transcriptional activation and repression of select genes by chromatin remodeling (alteration of DNA-nucleosome topology). Component of SWI/SNF chromatin remodeling complexes that carry out key enzymatic activities, changing chromatin structure by altering DNA-histone contacts within a nucleosome in an ATP-dependent manner. May stimulate the ATPase activity of the catalytic subunit of the complex. Belongs to the neural progenitors-specific chromatin remodeling complex (npBAF complex) and the neuron-specific chromatin remodeling complex (nBAF complex). During neural development a switch from a stem/progenitor to a postmitotic chromatin remodeling mechanism occurs as neurons exit the cell cycle and become committed to their adult state. The transition from proliferating neural stem/progenitor cells to postmitotic neurons requires a switch in subunit composition of the npBAF and nBAF complexes. As neural progenitors exit mitosis and differentiate into neurons, npBAF complexes which contain ACTL6A/BAF53A and PHF10/BAF45A, are exchanged for homologous alternative ACTL6B/BAF53B and DPF1/BAF45B or DPF3/BAF45C subunits in neuron-specific complexes (nBAF). The npBAF complex is essential for the self-renewal/proliferative capacity of the multipotent neural stem cells. The nBAF complex along with CREST plays a role regulating the activity of genes essential for dendrite growth. In Homo sapiens (Human), this protein is SWI/SNF complex subunit SMARCC1.